The sequence spans 260 residues: Large ribosomal subunit protein uL2 (260 aa).

Residues 1-24 (MGRVIRAQRKGAGSVFKSHTHHRK) form a disordered region.

The protein belongs to the universal ribosomal protein uL2 family.

Its subcellular location is the cytoplasm. The protein is Large ribosomal subunit protein uL2 (RPL8) of Solanum lycopersicum (Tomato).